Consider the following 147-residue polypeptide: Hemoglobin subunit beta-A/B (147 aa).

Residues 2 to 147 (EWTDAERSAI…VVNALKRQYH (146 aa)) enclose the Globin domain. Positions 63 and 92 each coordinate heme b.

Belongs to the globin family. In terms of assembly, heterotetramer of two alpha chains and two beta chains. In terms of tissue distribution, red blood cells.

Functionally, involved in oxygen transport from gills to the various peripheral tissues. This chain is Hemoglobin subunit beta-A/B, found in Cyprinus carpio (Common carp).